The sequence spans 128 residues: L-ectoine synthase (128 aa).

It belongs to the ectoine synthase family.

It carries out the reaction (2S)-4-acetamido-2-aminobutanoate = L-ectoine + H2O. The protein operates within amine and polyamine biosynthesis; ectoine biosynthesis; L-ectoine from L-aspartate 4-semialdehyde: step 3/3. Its function is as follows. Catalyzes the circularization of gamma-N-acetyl-alpha,gamma-diaminobutyric acid (ADABA) to ectoine (1,4,5,6-tetrahydro-2-methyl-4-pyrimidine carboxylic acid), which is an excellent osmoprotectant. This is L-ectoine synthase from Oceanobacillus iheyensis (strain DSM 14371 / CIP 107618 / JCM 11309 / KCTC 3954 / HTE831).